Reading from the N-terminus, the 1024-residue chain is Multidrug resistance protein MdtC (1024 aa).

11 helical membrane passes run 15–35, 333–353, 360–380, 387–407, 431–451, 463–483, 528–548, 853–873, 897–917, 953–973, and 984–1004; these read WLLTLTIVLAGFLGFRLLPVA, EVEQSLAISVGLVVLVVFAFL, LIPAVAVPVSLIGTFAAMYLC, LSLMALTVATGFVVDDAIVVL, VGFTVISMSISLVAVFLPLLL, FAITLSVSIAISLVISLTLTP, WGLLVFVATLGLTVYLYISIP, LWLILAAIATVYIVLGILYES, LFNAPFSLIALIGILLLIGIV, PIIMTTLAALLGALPLALGSG, and ITIVGGLVMSQLLTLFTTPVV.

This sequence belongs to the resistance-nodulation-cell division (RND) (TC 2.A.6) family. MdtC subfamily. In terms of assembly, part of a tripartite efflux system composed of MdtA, MdtB and MdtC. MdtC forms a heteromultimer with MdtB.

The protein localises to the cell inner membrane. This is Multidrug resistance protein MdtC from Erwinia tasmaniensis (strain DSM 17950 / CFBP 7177 / CIP 109463 / NCPPB 4357 / Et1/99).